The following is a 44-amino-acid chain: Photosystem I reaction center subunit IX (44 aa).

Residues 7 to 27 (YLSVAPVLATLWFGSLAGLLI) form a helical membrane-spanning segment.

The protein belongs to the PsaJ family.

It localises to the plastid. The protein localises to the chloroplast thylakoid membrane. In terms of biological role, may help in the organization of the PsaE and PsaF subunits. The chain is Photosystem I reaction center subunit IX from Piper cenocladum (Ant piper).